A 130-amino-acid polypeptide reads, in one-letter code: MTLLDPLANALSHITNSERVGKREVYIKPASKLIGEVLRVMQKYGYIGEFEFIDDGRAGVYRVQLLGRINKAGAIKPRFPVKVSEFEKWEKRFLPAFEFGILIVSTSQGVMSHKEAIEKGIGGRLIAYVY.

It belongs to the universal ribosomal protein uS8 family. Part of the 30S ribosomal subunit.

Its function is as follows. One of the primary rRNA binding proteins, it binds directly to 16S rRNA central domain where it helps coordinate assembly of the platform of the 30S subunit. This chain is Small ribosomal subunit protein uS8, found in Pyrococcus furiosus (strain ATCC 43587 / DSM 3638 / JCM 8422 / Vc1).